Here is a 266-residue protein sequence, read N- to C-terminus: MRKSLLALSLLAATSAPVLAADYSDGDIHKNDYKWMQFNLMGAFDELPGESSHDYLEMEFGGRSGIFDLYGYVDVFNLASDKGSDKVGDPKIFMKFAPRMSIDGLTGKDLSFGPVQELYVATLFEWDGTDYKTNPFSVNNQKVGIGSDVMVPWFGKVGVNLYGTYQGNQKDWNGFQISTNWFKPFYFFENGSFISYQGYIDYQFGMKEKYSSASNGGAMFNGIYWHSDRFAVGYGLKGYKDVYGIKDSDALKSTGFGHYVAVTYKF.

An N-terminal signal peptide occupies residues 1 to 20; the sequence is MRKSLLALSLLAATSAPVLA.

The protein belongs to the nucleoside-specific channel-forming outer membrane porin (Tsx) (TC 1.B.10) family.

It is found in the cell outer membrane. In terms of biological role, serves as receptor for a broad-host-range vibriophage, KVP40. The chain is Outer membrane protein OmpK (ompK) from Vibrio parahaemolyticus serotype O3:K6 (strain RIMD 2210633).